The sequence spans 184 residues: Large ribosomal subunit protein uL6 (184 aa).

This sequence belongs to the universal ribosomal protein uL6 family. Part of the 50S ribosomal subunit.

Functionally, this protein binds to the 23S rRNA, and is important in its secondary structure. It is located near the subunit interface in the base of the L7/L12 stalk, and near the tRNA binding site of the peptidyltransferase center. The chain is Large ribosomal subunit protein uL6 from Pyrococcus abyssi (strain GE5 / Orsay).